We begin with the raw amino-acid sequence, 498 residues long: Aspartyl/glutamyl-tRNA(Asn/Gln) amidotransferase subunit B (498 aa).

The protein belongs to the GatB/GatE family. GatB subfamily. In terms of assembly, heterotrimer of A, B and C subunits.

The enzyme catalyses L-glutamyl-tRNA(Gln) + L-glutamine + ATP + H2O = L-glutaminyl-tRNA(Gln) + L-glutamate + ADP + phosphate + H(+). It carries out the reaction L-aspartyl-tRNA(Asn) + L-glutamine + ATP + H2O = L-asparaginyl-tRNA(Asn) + L-glutamate + ADP + phosphate + 2 H(+). Its function is as follows. Allows the formation of correctly charged Asn-tRNA(Asn) or Gln-tRNA(Gln) through the transamidation of misacylated Asp-tRNA(Asn) or Glu-tRNA(Gln) in organisms which lack either or both of asparaginyl-tRNA or glutaminyl-tRNA synthetases. The reaction takes place in the presence of glutamine and ATP through an activated phospho-Asp-tRNA(Asn) or phospho-Glu-tRNA(Gln). The chain is Aspartyl/glutamyl-tRNA(Asn/Gln) amidotransferase subunit B from Erythrobacter litoralis (strain HTCC2594).